Consider the following 311-residue polypeptide: MSYQDLKECKIITAFITPFHEDGSINFDAIPALIEHLLAHHTDGILLAGTTAESPTLTHDEELELFAAVQKVVNGRVPLIAGVGTNDTRDSIEFVKEVAEFGGFAAGLAIVPYYNKPSQEGMYQHFKAIADASDLPIIIYNIPGRVVVELTPETMLRLADHPNIIGVKECTSLANMAYLIEHKPEEFLIYTGEDGDAFHAMNLGADGVISVASHTNGDEMHEMFTAIAESDMKKAAAIQRKFIPKVNALFSYPSPAPVKAILNYMGFEAGPTRLPLVPAPEEDAKRIIKVVVDGDYEATKATVTGVLRPDY.

A pyruvate-binding site is contributed by T51. The active-site Proton donor/acceptor is Y140. The Schiff-base intermediate with substrate role is filled by K168. I209 serves as a coordination point for pyruvate.

The protein belongs to the DapA family. Homotetramer; dimer of dimers.

It is found in the cytoplasm. The catalysed reaction is L-aspartate 4-semialdehyde + pyruvate = (2S,4S)-4-hydroxy-2,3,4,5-tetrahydrodipicolinate + H2O + H(+). The protein operates within amino-acid biosynthesis; L-lysine biosynthesis via DAP pathway; (S)-tetrahydrodipicolinate from L-aspartate: step 3/4. In terms of biological role, catalyzes the condensation of (S)-aspartate-beta-semialdehyde [(S)-ASA] and pyruvate to 4-hydroxy-tetrahydrodipicolinate (HTPA). This Streptococcus pneumoniae (strain ATCC 700669 / Spain 23F-1) protein is 4-hydroxy-tetrahydrodipicolinate synthase.